The primary structure comprises 158 residues: Large ribosomal subunit protein eL24 (158 aa).

A compositionally biased stretch (basic and acidic residues) spans 98-146; the sequence is LDASHKKAEAEKAVRELKQKKANDIEKKRADRKLQGKDVKAAKKAETKK. The tract at residues 98-158 is disordered; sequence LDASHKKAEA…QPVGAKGGKK (61 aa).

The protein belongs to the eukaryotic ribosomal protein eL24 family.

The sequence is that of Large ribosomal subunit protein eL24 (RPL24) from Tetrahymena thermophila (strain SB210).